We begin with the raw amino-acid sequence, 87 residues long: Small ribosomal subunit protein uS17 (87 aa).

The protein belongs to the universal ribosomal protein uS17 family. Part of the 30S ribosomal subunit.

Its function is as follows. One of the primary rRNA binding proteins, it binds specifically to the 5'-end of 16S ribosomal RNA. This Neisseria gonorrhoeae (strain ATCC 700825 / FA 1090) protein is Small ribosomal subunit protein uS17.